The following is a 1235-amino-acid chain: ATP-dependent helicase/nuclease subunit A (1235 aa).

A UvrD-like helicase ATP-binding domain is found at 12–482 (ALWTDDQWKA…IDLSQNFRSR (471 aa)). 33 to 40 (AAAGSGKT) lines the ATP pocket. The UvrD-like helicase C-terminal domain maps to 509 to 800 (AAELTLGASF…RMMTIHASKG (292 aa)).

This sequence belongs to the helicase family. AddA subfamily. In terms of assembly, heterodimer of AddA and AddB/RexB. Requires Mg(2+) as cofactor.

It catalyses the reaction Couples ATP hydrolysis with the unwinding of duplex DNA by translocating in the 3'-5' direction.. The catalysed reaction is ATP + H2O = ADP + phosphate + H(+). Functionally, the heterodimer acts as both an ATP-dependent DNA helicase and an ATP-dependent, dual-direction single-stranded exonuclease. Recognizes the chi site generating a DNA molecule suitable for the initiation of homologous recombination. The AddA nuclease domain is required for chi fragment generation; this subunit has the helicase and 3' -&gt; 5' nuclease activities. In Listeria innocua serovar 6a (strain ATCC BAA-680 / CLIP 11262), this protein is ATP-dependent helicase/nuclease subunit A.